Reading from the N-terminus, the 157-residue chain is MPRKGHIAKREPLADPVYGSTLANKFVNSMMWDGKKSTAQGIFYEAMKKLEAKGGGEEAIKLFKKAVENAKPLLEVKTRRVGGANYQVPVEVNADRRTSLAIRWLISYSRGRGEKGMIDKLANELLDAANGRGAAIKKKEDVHRMAEANKAFAHYRW.

It belongs to the universal ribosomal protein uS7 family. In terms of assembly, part of the 30S ribosomal subunit. Contacts proteins S9 and S11.

Functionally, one of the primary rRNA binding proteins, it binds directly to 16S rRNA where it nucleates assembly of the head domain of the 30S subunit. Is located at the subunit interface close to the decoding center, probably blocks exit of the E-site tRNA. The polypeptide is Small ribosomal subunit protein uS7 (Koribacter versatilis (strain Ellin345)).